Reading from the N-terminus, the 255-residue chain is GTP cyclohydrolase FolE2 (255 aa).

Belongs to the GTP cyclohydrolase IV family.

The enzyme catalyses GTP + H2O = 7,8-dihydroneopterin 3'-triphosphate + formate + H(+). The protein operates within cofactor biosynthesis; 7,8-dihydroneopterin triphosphate biosynthesis; 7,8-dihydroneopterin triphosphate from GTP: step 1/1. Its function is as follows. Converts GTP to 7,8-dihydroneopterin triphosphate. This Syntrophus aciditrophicus (strain SB) protein is GTP cyclohydrolase FolE2.